A 400-amino-acid chain; its full sequence is Cytohesin-2 (400 aa).

The stretch at 10-67 forms a coiled coil; the sequence is DLTPEERMELENIRRRKQELLVEIQRLREELSEAMSEVEGLEANEGSKTLQRNRKMAM. An SEC7 domain is found at 72–201; sequence FNMDPKKGIQ…VIMLNTSLHN (130 aa). The PH domain occupies 259–376; the sequence is NPDREGWLLK…WIKSIQAAVS (118 aa). A 1,2-diacyl-sn-glycero-3-phospho-(1D-myo-inositol-3,4,5-trisphosphate) is bound by residues 268 to 276, Arg280, Tyr291, Arg301, Lys339, Asn350, and His351; that span reads KLGGGRVKT. Residues 387 to 395 are C-terminal autoinhibitory region; the sequence is RKKRISVKK.

Heteromer. Composed of TAMALIN, CYTH2 and at least one GRM1. Interacts with ARRB1. Interacts with ARL4D; the interaction is direct. Directly interacts with CCDC120 through the coiled coil domain; this interaction stabilizes CCDC120, possibly by preventing its ubiquitination, and is required for neurite growth in a neuroblastoma cell line. Interacts with FRMD4A. Interacts (via N-terminal domain) with INAVA (via N-terminal domain). In terms of tissue distribution, present in all tissues tested, with highest protein levels in brain and adrenal.

It localises to the cell membrane. Its subcellular location is the cytoplasm. The protein resides in the cell projection. It is found in the growth cone. The protein localises to the cell junction. It localises to the tight junction. Its subcellular location is the adherens junction. Acts as a guanine-nucleotide exchange factor (GEF). Promotes guanine-nucleotide exchange on ARF1, ARF3 and ARF6. Activates ARF factors through replacement of GDP with GTP. The cell membrane form, in association with ARL4 proteins, recruits ARF6 to the plasma membrane. Involved in neurite growth. The protein is Cytohesin-2 (Cyth2) of Mus musculus (Mouse).